Here is a 1228-residue protein sequence, read N- to C-terminus: Apical endosomal glycoprotein (1228 aa).

Positions 1 to 21 are cleaved as a signal peptide; that stretch reads MCLPSHLLSTWVLFMAAQSLG. The Extracellular portion of the chain corresponds to 23-1159; it reads TWLPNHCRSP…GEVAAPVSVP (1137 aa). An LDL-receptor class A 1; truncated domain is found at 28 to 49; that stretch reads HCRSPIKAVCNFVCDCGDCSDE. One can recognise an MAM 1 domain in the interval 65 to 223; that stretch reads FTCNFEQDSC…DDVEFRDCGL (159 aa). Asn-204 carries an N-linked (GlcNAc...) asparagine glycan. The region spanning 229–267 is the LDL-receptor class A 2 domain; that stretch reads RCPLGHHHCQNKACVEPHQLCDGEDNCGDRSDEDPLICS. Cystine bridges form between Cys-230–Cys-242, Cys-237–Cys-255, and Cys-249–Cys-266. Positions 270–426 constitute an MAM 2 domain; the sequence is MATDFETGLG…DLIMSSHCML (157 aa). 2 N-linked (GlcNAc...) asparagine glycosylation sites follow: Asn-290 and Asn-340. In terms of domain architecture, LDL-receptor class A 3 spans 457–492; it reads TCEPGHLSCGDLCVPPEQLCDFQKHCAEGEDEHKCG. 3 disulfide bridges follow: Cys-458-Cys-469, Cys-465-Cys-482, and Cys-476-Cys-491. MAM domains lie at 492–649, 659–815, 817–975, and 977–1144; these read GTTD…DCNP, LSCN…PCWA, KSCS…PCPQ, and GSCD…QCKQ. Asn-641 carries an N-linked (GlcNAc...) asparagine glycan. Asn-841 carries an N-linked (GlcNAc...) asparagine glycan. A helical transmembrane segment spans residues 1160-1180; it reads VAVGGALLFFMFLVLMGLGGW. At 1181–1228 the chain is on the cytoplasmic side; that stretch reads HWLQKQHCPGQRSTDAAASGFANILFNADHVTLPESITSNPQSPPDLA.

Its subcellular location is the membrane. Functionally, probably involved in the sorting and selective transport of receptors and ligands across polarized epithelia. The protein is Apical endosomal glycoprotein of Mus musculus (Mouse).